Consider the following 130-residue polypeptide: D-ribose pyranase (130 aa).

Catalysis depends on H20, which acts as the Proton donor. Substrate is bound by residues D28, H97, and 119-121; that span reads YSN.

It belongs to the RbsD / FucU family. RbsD subfamily. As to quaternary structure, homodecamer.

The protein resides in the cytoplasm. It carries out the reaction beta-D-ribopyranose = beta-D-ribofuranose. It participates in carbohydrate metabolism; D-ribose degradation; D-ribose 5-phosphate from beta-D-ribopyranose: step 1/2. Functionally, catalyzes the interconversion of beta-pyran and beta-furan forms of D-ribose. This Lacticaseibacillus casei (strain BL23) (Lactobacillus casei) protein is D-ribose pyranase.